The primary structure comprises 101 residues: Integration host factor subunit beta (101 aa).

The segment at 57 to 76 (PARAGRNPRTGEHVPVDQKS) is disordered.

Belongs to the bacterial histone-like protein family. As to quaternary structure, heterodimer of an alpha and a beta chain.

This protein is one of the two subunits of integration host factor, a specific DNA-binding protein that functions in genetic recombination as well as in transcriptional and translational control. The sequence is that of Integration host factor subunit beta from Nitrobacter winogradskyi (strain ATCC 25391 / DSM 10237 / CIP 104748 / NCIMB 11846 / Nb-255).